A 241-amino-acid chain; its full sequence is Probable transcriptional regulatory protein Rpic_2388 (241 aa).

The protein belongs to the TACO1 family.

The protein localises to the cytoplasm. The chain is Probable transcriptional regulatory protein Rpic_2388 from Ralstonia pickettii (strain 12J).